The chain runs to 81 residues: Photosystem I iron-sulfur center (81 aa).

2 consecutive 4Fe-4S ferredoxin-type domains span residues 2 to 31 and 37 to 68; these read SHAVKIYDTCIGCTQCVRACPLDVLEMVPW and GQIASSPRTEDCVGCKRCETACPTDFLSIRVY. The [4Fe-4S] cluster site is built by Cys-11, Cys-14, Cys-17, Cys-21, Cys-48, Cys-51, Cys-54, and Cys-58.

The cyanobacterial PSI reaction center is composed of one copy each of PsaA,B,C,D,E,F,I,J,K,L,M and X, and forms trimeric complexes. The cofactor is [4Fe-4S] cluster.

The protein localises to the cellular thylakoid membrane. It carries out the reaction reduced [plastocyanin] + hnu + oxidized [2Fe-2S]-[ferredoxin] = oxidized [plastocyanin] + reduced [2Fe-2S]-[ferredoxin]. In terms of biological role, apoprotein for the two 4Fe-4S centers FA and FB of photosystem I (PSI); essential for photochemical activity. FB is the terminal electron acceptor of PSI, donating electrons to ferredoxin. The C-terminus interacts with PsaA/B/D and helps assemble the protein into the PSI complex. Required for binding of PsaD and PsaE to PSI. PSI is a plastocyanin/cytochrome c6-ferredoxin oxidoreductase, converting photonic excitation into a charge separation, which transfers an electron from the donor P700 chlorophyll pair to the spectroscopically characterized acceptors A0, A1, FX, FA and FB in turn. The polypeptide is Photosystem I iron-sulfur center (Prochlorococcus marinus subsp. pastoris (strain CCMP1986 / NIES-2087 / MED4)).